We begin with the raw amino-acid sequence, 428 residues long: MRVVVLGSGVVGVTSAYYLARAGHEVTVIDREAGPALETSFANAGQISPGYASPWAAPGVPLKAVKWMFQKHAPLAIRLDGTQFQLQWMWQMLQNCTSSRYAVNKGRMVRLAEYSRDCLQALRAETGIQYEGRTGGTLQVFRTQQQFDGAAKDIAVLQEANVPYELLSPAELARAEPALAAVSHKLTGGLRLPGDETGDCQMFTTRLAALAEELGVKFRYNTPIDALAMAGDRIAGVKCGEELVRADSFVVALGSYSTQFLSGLVKIPVYPLKGYSITAPIVNEASAPVSTVLDETYKIAITRFDDRIRVGGMAEIVGFDKSLRQARRETLELCVNDLFPGGGDTSKATFWTGLRPMTPDGTPIVGRTPVPNLFLNTGHGTLGWTMSCGSGQLLADVMSGKQPAIKADDLSVHRYLGEVGGAHRPAYA.

3 to 17 (VVVLGSGVVGVTSAY) is a binding site for FAD.

It belongs to the DadA oxidoreductase family. FAD serves as cofactor.

It catalyses the reaction a D-alpha-amino acid + A + H2O = a 2-oxocarboxylate + AH2 + NH4(+). The protein operates within amino-acid degradation; D-alanine degradation; NH(3) and pyruvate from D-alanine: step 1/1. Its function is as follows. Oxidative deamination of D-amino acids. The sequence is that of D-amino acid dehydrogenase from Paraburkholderia phytofirmans (strain DSM 17436 / LMG 22146 / PsJN) (Burkholderia phytofirmans).